A 248-amino-acid polypeptide reads, in one-letter code: Lysine-rich arabinogalactan protein 19 (248 aa).

Positions 1 to 24 (MESNSIIWSLLLASALISSFSVNA) are cleaved as a signal peptide. Low complexity predominate over residues 25 to 37 (QGPAASPVTSTTT). The disordered stretch occupies residues 25–221 (QGPAASPVTS…APSPNTNGGN (197 aa)). Pro residues-rich tracts occupy residues 38–57 (APPPTTAAPPTTAAPPPTTT), 67–86 (PASPVTPPPAVTPTSPPAPK), and 94–171 (ATPP…PAPA). Basic residues predominate over residues 173-187 (TKHKRKHKHKRHHHA). Positions 189-203 (APAPIPPSPPSPPVL) are enriched in pro residues. A lipid anchor (GPI-anchor amidated serine) is attached at Ser-196. Residues 197-248 (PPSPPVLTDPQDTAPAPSPNTNGGNALNQLKGRAVMWLNTGLVILFLLAMTA) constitute a propeptide, removed in mature form.

This sequence belongs to the lysine-rich AGP family. Post-translationally, O-glycosylated on the hydroxyproline residues. In terms of tissue distribution, strongly expressed in stems, moderately expressed in flowers and roots and weakly expressed in young leaves.

It localises to the cell membrane. Its function is as follows. Proteoglycan that seems to be implicated in diverse developmental roles such as differentiation, cell-cell recognition, embryogenesis and programmed cell death. This is Lysine-rich arabinogalactan protein 19 (AGP19) from Arabidopsis thaliana (Mouse-ear cress).